We begin with the raw amino-acid sequence, 223 residues long: ATP phosphoribosyltransferase (223 aa).

The protein belongs to the ATP phosphoribosyltransferase family. Short subfamily. As to quaternary structure, heteromultimer composed of HisG and HisZ subunits.

It is found in the cytoplasm. It catalyses the reaction 1-(5-phospho-beta-D-ribosyl)-ATP + diphosphate = 5-phospho-alpha-D-ribose 1-diphosphate + ATP. It functions in the pathway amino-acid biosynthesis; L-histidine biosynthesis; L-histidine from 5-phospho-alpha-D-ribose 1-diphosphate: step 1/9. Its function is as follows. Catalyzes the condensation of ATP and 5-phosphoribose 1-diphosphate to form N'-(5'-phosphoribosyl)-ATP (PR-ATP). Has a crucial role in the pathway because the rate of histidine biosynthesis seems to be controlled primarily by regulation of HisG enzymatic activity. This is ATP phosphoribosyltransferase from Desulfitobacterium hafniense (strain Y51).